A 312-amino-acid chain; its full sequence is Pre-mRNA-splicing factor 38A (312 aa).

An N-terminal protein interaction domain region spans residues 1 to 179 (MANRTVKDAH…VLEEAEQLEP (179 aa)). Residues S11, S193, S194, S209, and S226 each carry the phosphoserine modification. Residues 170–204 (VLEEAEQLEPRVSALEEDMDDVESSEEEEEEDEKL) are a coiled coil. The disordered stretch occupies residues 181-312 (VSALEEDMDD…SHKKSRRGNE (132 aa)). The segment covering 184-202 (LEEDMDDVESSEEEEEEDE) has biased composition (acidic residues). The segment covering 203-224 (KLERVPSPDHRRRSYRDLDKPR) has biased composition (basic and acidic residues). Basic residues-rich tracts occupy residues 225 to 294 (RSPT…RSHS) and 301 to 312 (KKSHKKSRRGNE).

It belongs to the PRP38 family. As to quaternary structure, component of the spliceosome B complex. Interacts (via N-terminal interaction domain) with ZMAT2 and MFAP1.

The protein localises to the nucleus. Functionally, involved in pre-mRNA splicing as a component of the spliceosome. This chain is Pre-mRNA-splicing factor 38A (PRPF38A), found in Bos taurus (Bovine).